A 258-amino-acid polypeptide reads, in one-letter code: Small ribosomal subunit protein mS40 (258 aa).

A mitochondrion-targeting transit peptide spans 1-35; it reads MAASVLNVLLRRLPYFSPFRGAYGVQVPLQTLCTK. S49 is subject to Phosphoserine. A disordered region spans residues 221-258; that stretch reads QGHLREESGPPPESMPKVPLTAPNEATSTEQAGPQSAL. Residues 244–258 are compositionally biased toward polar residues; the sequence is NEATSTEQAGPQSAL.

This sequence belongs to the bacterial ribosomal protein bS18 family. Mitochondrion-specific ribosomal protein mS40 subfamily. Component of the mitochondrial ribosome small subunit (28S) which comprises a 12S rRNA and about 30 distinct proteins.

Its subcellular location is the mitochondrion. The sequence is that of Small ribosomal subunit protein mS40 from Bos taurus (Bovine).